A 476-amino-acid polypeptide reads, in one-letter code: Aspartyl/glutamyl-tRNA(Asn/Gln) amidotransferase subunit B (476 aa).

This sequence belongs to the GatB/GatE family. GatB subfamily. In terms of assembly, heterotrimer of A, B and C subunits.

It carries out the reaction L-glutamyl-tRNA(Gln) + L-glutamine + ATP + H2O = L-glutaminyl-tRNA(Gln) + L-glutamate + ADP + phosphate + H(+). It catalyses the reaction L-aspartyl-tRNA(Asn) + L-glutamine + ATP + H2O = L-asparaginyl-tRNA(Asn) + L-glutamate + ADP + phosphate + 2 H(+). Functionally, allows the formation of correctly charged Asn-tRNA(Asn) or Gln-tRNA(Gln) through the transamidation of misacylated Asp-tRNA(Asn) or Glu-tRNA(Gln) in organisms which lack either or both of asparaginyl-tRNA or glutaminyl-tRNA synthetases. The reaction takes place in the presence of glutamine and ATP through an activated phospho-Asp-tRNA(Asn) or phospho-Glu-tRNA(Gln). This chain is Aspartyl/glutamyl-tRNA(Asn/Gln) amidotransferase subunit B, found in Clostridium botulinum (strain ATCC 19397 / Type A).